We begin with the raw amino-acid sequence, 298 residues long: DNA-binding transcriptional activator HetR (298 aa).

Ser152 is a catalytic residue.

It belongs to the peptidase S48 family. Homodimer; disulfide-linked.

In terms of biological role, controls heterocyst differentiation. Dimerization is required for DNA-binding. Has both a protease and a DNA-binding activity. This chain is DNA-binding transcriptional activator HetR, found in Nostoc sp. (strain PCC 9229).